The chain runs to 457 residues: Adenylosuccinate synthetase isozyme 1 (457 aa).

Residues 1–24 are disordered; it reads MSGTRASNDRPPGTGGVKRGRLQQ. Residues 42-48 and 70-72 contribute to the GTP site; these read GDEGKGK and GHT. Catalysis depends on aspartate 43, which acts as the Proton acceptor. Mg(2+)-binding residues include aspartate 43 and glycine 70. A substrate-binding site is contributed by aspartate 43. IMP-binding positions include 43–46, 68–71, threonine 163, arginine 177, asparagine 256, threonine 271, and arginine 335; these read DEGK and NAGH. The active-site Proton donor is histidine 71. 331 to 337 lines the substrate pocket; the sequence is VTTGRKR. GTP-binding positions include arginine 337, 363 to 365, and 445 to 448; these read KLD and GVGK.

It belongs to the adenylosuccinate synthetase family. In terms of assembly, homodimer. Mg(2+) serves as cofactor. In terms of tissue distribution, high levels in muscle.

The protein localises to the cytoplasm. It localises to the membrane. The enzyme catalyses IMP + L-aspartate + GTP = N(6)-(1,2-dicarboxyethyl)-AMP + GDP + phosphate + 2 H(+). It functions in the pathway purine metabolism; AMP biosynthesis via de novo pathway; AMP from IMP: step 1/2. With respect to regulation, weakly inhibited by AMP non-competitively to all substrates. Inhibited by IMP non-competitively with respect to GTP. Inhibited by fructose 1,6-bisphosphate competitively with respect to IMP. Its function is as follows. Component of the purine nucleotide cycle (PNC), which interconverts IMP and AMP to regulate the nucleotide levels in various tissues, and which contributes to glycolysis and ammoniagenesis. Catalyzes the first committed step in the biosynthesis of AMP from IMP. The protein is Adenylosuccinate synthetase isozyme 1 (Adss1) of Mus musculus (Mouse).